A 430-amino-acid chain; its full sequence is Enolase (430 aa).

Q165 provides a ligand contact to (2R)-2-phosphoglycerate. The active-site Proton donor is the E207. Mg(2+)-binding residues include D244, E287, and D314. Residues K339, R368, S369, and K390 each coordinate (2R)-2-phosphoglycerate. Catalysis depends on K339, which acts as the Proton acceptor.

This sequence belongs to the enolase family. As to quaternary structure, component of the RNA degradosome, a multiprotein complex involved in RNA processing and mRNA degradation. Mg(2+) is required as a cofactor.

It is found in the cytoplasm. The protein localises to the secreted. It localises to the cell surface. It catalyses the reaction (2R)-2-phosphoglycerate = phosphoenolpyruvate + H2O. It functions in the pathway carbohydrate degradation; glycolysis; pyruvate from D-glyceraldehyde 3-phosphate: step 4/5. In terms of biological role, catalyzes the reversible conversion of 2-phosphoglycerate (2-PG) into phosphoenolpyruvate (PEP). It is essential for the degradation of carbohydrates via glycolysis. The protein is Enolase of Xanthomonas euvesicatoria pv. vesicatoria (strain 85-10) (Xanthomonas campestris pv. vesicatoria).